A 360-amino-acid chain; its full sequence is Methyltransferase pvhD (360 aa).

S-adenosyl-L-methionine is bound by residues 201–202 (SG), Asp227, 251–252 (DL), Arg267, and Arg268.

The protein belongs to the class I-like SAM-binding methyltransferase superfamily. Cation-independent O-methyltransferase family.

The protein operates within secondary metabolite biosynthesis. Methyltransferase; part of the gene cluster that mediates the biosynthesis of varicidin A, an antifungal natural product containing a cis-octahydrodecalin core. The PKS module of pvhA together with the enoylreductase pvhC catalyze the formation of the polyketide unit which is then conjugated to L-isoleucine by the condensation domain of the NRPS module. Activity of the Dieckmann cyclase domain (RED) of pvhA results in release of an acyclic tetramate. The cytochrome P450 monooxygenase pvhE then catalyzes the oxidation of the C21 methyl group to a to carboxylate group. The methyltransferase pvhD then further methylates the pvhE product. The Diels-Alderase pvhB is able to catalyze Diels-Alder cycloaddition using both pvhE and pvhD products as substrates to form the decalin ring, yielding varicidin B and A, respectively. In Talaromyces variabilis (Penicillium variabile), this protein is Methyltransferase pvhD.